The chain runs to 267 residues: MSLEVRGIEVWRGRGRTLGPMDLTLEPGEVLAVVGPNGAGKSTLLSAMSGELRCSTGEVLLDGTPLLQWKPRERAMRLGVLPQESSLGFGFTALEVALLGRSPHSSRAEGSADLAAAVAALDATDTRHLASRSYLTLSGGERQRVQLSRVLAQLSEPLASGHRYLLLDEPTASLDLAHQHLVLEAAARFAQAGGAVLAVLHDLNLAARYAHRMAVLAEGRVVELGAPAQVLSQELVARVFGLRVQVVEWPGSPGPLVIPEGRAPLTP.

The region spanning 3 to 243 (LEVRGIEVWR…ELVARVFGLR (241 aa)) is the ABC transporter domain. 35 to 42 (GPNGAGKS) contacts ATP.

This sequence belongs to the ABC transporter superfamily. Heme (hemin) importer (TC 3.A.1.14.5) family. As to quaternary structure, the complex is composed of two ATP-binding proteins (HmuV), two transmembrane proteins (HmuU) and a solute-binding protein (HmuT).

Its subcellular location is the cell inner membrane. Part of the ABC transporter complex HmuTUV involved in hemin import. Responsible for energy coupling to the transport system. This is Hemin import ATP-binding protein HmuV from Myxococcus xanthus (strain DK1622).